Consider the following 139-residue polypeptide: Probable trafficking protein particle complex subunit 2 (139 aa).

Belongs to the TRAPP small subunits family. Sedlin subfamily. In terms of assembly, part of the multisubunit TRAPP (transport protein particle) complex.

Its subcellular location is the cytoplasm. It is found in the perinuclear region. The protein resides in the endoplasmic reticulum. It localises to the golgi apparatus. In terms of biological role, may play a role in vesicular transport from endoplasmic reticulum to Golgi. Involved in dsRNA uptake. The chain is Probable trafficking protein particle complex subunit 2 from Drosophila melanogaster (Fruit fly).